The primary structure comprises 577 residues: Sulfite reductase [NADPH] hemoprotein beta-component (577 aa).

Positions 441, 447, 486, and 490 each coordinate [4Fe-4S] cluster. Cys-490 provides a ligand contact to siroheme.

This sequence belongs to the nitrite and sulfite reductase 4Fe-4S domain family. In terms of assembly, alpha(8)-beta(8). The alpha component is a flavoprotein, the beta component is a hemoprotein. Siroheme is required as a cofactor. It depends on [4Fe-4S] cluster as a cofactor.

The enzyme catalyses hydrogen sulfide + 3 NADP(+) + 3 H2O = sulfite + 3 NADPH + 4 H(+). It participates in sulfur metabolism; hydrogen sulfide biosynthesis; hydrogen sulfide from sulfite (NADPH route): step 1/1. Its function is as follows. Component of the sulfite reductase complex that catalyzes the 6-electron reduction of sulfite to sulfide. This is one of several activities required for the biosynthesis of L-cysteine from sulfate. This is Sulfite reductase [NADPH] hemoprotein beta-component from Pectobacterium atrosepticum (strain SCRI 1043 / ATCC BAA-672) (Erwinia carotovora subsp. atroseptica).